We begin with the raw amino-acid sequence, 319 residues long: G-protein coupled receptor 171 (319 aa).

Residues 1 to 21 (MTNSSTFCPVYRDLEPFTYFF) are Extracellular-facing. N-linked (GlcNAc...) asparagine glycosylation is present at asparagine 3. A helical transmembrane segment spans residues 22–42 (YLVFLIGIIGSCFATWAFIQK). The Cytoplasmic segment spans residues 43 to 48 (TTNHRC). A helical membrane pass occupies residues 49–69 (VSIYLINLLTADFLLTLALPV). The Extracellular portion of the chain corresponds to 70-89 (KIIVDLGVAPWKLRIFHCQV). Residues 90 to 110 (TACLIYINMYLSIIFLAFVSI) form a helical membrane-spanning segment. At 111 to 132 (DRCLQLIHSCKIYRIQEPGFAK) the chain is on the cytoplasmic side. Residues 133-153 (MISAVVWLMVLLIMVPNMVIP) form a helical membrane-spanning segment. Residues 154 to 181 (IKDIKEKSNVGCMEFKKEFGRNWHLLTN) are Extracellular-facing. Residues 182 to 202 (FICVAIFLNFSVIILISNFLA) traverse the membrane as a helical segment. Residues 203–224 (IRQLYRNRDNTNYPSVKSALLH) lie on the Cytoplasmic side of the membrane. A helical transmembrane segment spans residues 225–245 (ILLVTASYIICFVPYHAVRIP). At 246–268 (YTLSQTEVISDCSTRIALFKAKE) the chain is on the extracellular side. Residues 269–289 (ATLLLAVSNLCFDPILYYHLS) traverse the membrane as a helical segment. Residues 290–319 (KAFRLKVTETFASPKKSKPLEERLRSENDV) are Cytoplasmic-facing.

It belongs to the G-protein coupled receptor 1 family. As to expression, highly expressed in hypothalamus, including the arcuate nucleus, paraventricular nucleus and dorsomedial hypothalamus. Expressed in periaqueductal gray (at protein level), found primarily in GABAergic neurons and to a lesser extent in glutamatergic neurons. Expressed in T cells and natural killer cells.

Its subcellular location is the cell membrane. G-protein coupled receptor for Big LEN, a 16-amino acid neuropeptide produced from the precursor protein, proSAAS (encoded by PCSK1N). Acts through a G(i)-alpha-mediated pathway in response to Big LEN. Big LEN-GPR171 system plays an important role in regulating feeding and metabolism. Also plays a role in modulating fear and anxiety-like behaviors in the basolateral amygdala. Big LEN-GPR171 modulates the mu-type opioid receptor signaling and antinociception. Acts as a negative regulator T cell function. This Mus musculus (Mouse) protein is G-protein coupled receptor 171 (Gpr171).